A 438-amino-acid polypeptide reads, in one-letter code: MSNSTQHWIAQRGTALQGSLTIPGDKSVSHRAVMFAALADGTSKIDGFLEGEDTRSTAAIFAQLGVRIETPSASQRIVHGVGVDGLQPPQGPLDCGNAGTGMRLLAGVLAAQRFDSVLVGDASLSKRPMRRVTDPLAQMGARIETESDGTPPLRVHGGQALQGITFASPVASAQVKSAVLLAGLYATGETSVSEPHPTRDYTERMLSAFGVEIAFSPGQARLRGGQRLRATDIAVPADFSSAAFFIVAASIIPGSDVTLRAVGLNPRRTGLLAALRLMGADIVEDNHAEHGGEPVADLRVRYAPLRGAQIPEALVPDMIDEFPALFVAAAAARGDTVVSGAAELRVKESDRLAAMATGLRALGIVVDEKPDGATIHGGTLGSGVIESHGDHRIAMAFAIAGQLSTGTVQVNDVANVATSFPGFDSLAQGAGFGLSARP.

3 residues coordinate 3-phosphoshikimate: lysine 26, serine 27, and arginine 31. Lysine 26 contributes to the phosphoenolpyruvate binding site. Phosphoenolpyruvate contacts are provided by glycine 99 and arginine 127. 4 residues coordinate 3-phosphoshikimate: serine 172, glutamine 174, aspartate 320, and lysine 347. A phosphoenolpyruvate-binding site is contributed by glutamine 174. Aspartate 320 (proton acceptor) is an active-site residue. Phosphoenolpyruvate-binding residues include arginine 351 and arginine 392.

Belongs to the EPSP synthase family. Monomer.

It is found in the cytoplasm. It carries out the reaction 3-phosphoshikimate + phosphoenolpyruvate = 5-O-(1-carboxyvinyl)-3-phosphoshikimate + phosphate. It functions in the pathway metabolic intermediate biosynthesis; chorismate biosynthesis; chorismate from D-erythrose 4-phosphate and phosphoenolpyruvate: step 6/7. Catalyzes the transfer of the enolpyruvyl moiety of phosphoenolpyruvate (PEP) to the 5-hydroxyl of shikimate-3-phosphate (S3P) to produce enolpyruvyl shikimate-3-phosphate and inorganic phosphate. In Xanthomonas campestris pv. campestris (strain B100), this protein is 3-phosphoshikimate 1-carboxyvinyltransferase.